Here is a 139-residue protein sequence, read N- to C-terminus: Toxin FitB (139 aa).

The PINc domain occupies Ile-2–Thr-123. Residues Asp-5 and Asp-104 each coordinate Mg(2+).

It belongs to the PINc/VapC protein family. In terms of assembly, forms a heterodimer with FitA, 4 FitAB heterodimers form a complex that binds to promoter DNA. The complex is also seen in solution. This protein does not actually contact DNA. Requires Mg(2+) as cofactor.

Functionally, toxic component of a type II toxin-antitoxin (TA) system. Plays a role in the speed with which bacteria traverse human epithelial cells; disruption of the locus increases the speed of trafficking about 2-4-fold. FitAB binds to its own promoter better than FitA alone. The expected nuclease activity was not observed for the FitAB complex, perhaps because FitA (the antitoxin) prevents metal binding and thus catalysis by FitB. The chain is Toxin FitB (fitB) from Neisseria gonorrhoeae (strain ATCC 700825 / FA 1090).